The sequence spans 434 residues: ATP phosphoribosyltransferase regulatory subunit (434 aa).

Belongs to the class-II aminoacyl-tRNA synthetase family. HisZ subfamily. Heteromultimer composed of HisG and HisZ subunits.

It is found in the cytoplasm. The protein operates within amino-acid biosynthesis; L-histidine biosynthesis; L-histidine from 5-phospho-alpha-D-ribose 1-diphosphate: step 1/9. In terms of biological role, required for the first step of histidine biosynthesis. May allow the feedback regulation of ATP phosphoribosyltransferase activity by histidine. The sequence is that of ATP phosphoribosyltransferase regulatory subunit from Geobacter metallireducens (strain ATCC 53774 / DSM 7210 / GS-15).